Reading from the N-terminus, the 502-residue chain is Lysine--tRNA ligase (502 aa).

Mg(2+) contacts are provided by E403 and E410.

This sequence belongs to the class-II aminoacyl-tRNA synthetase family. As to quaternary structure, homodimer. Requires Mg(2+) as cofactor.

The protein localises to the cytoplasm. The enzyme catalyses tRNA(Lys) + L-lysine + ATP = L-lysyl-tRNA(Lys) + AMP + diphosphate. The polypeptide is Lysine--tRNA ligase (Synechococcus sp. (strain CC9605)).